Reading from the N-terminus, the 156-residue chain is uncharacterized protein (156 aa).

Transmembrane regions (helical) follow at residues 7-29 (AQISVVLSTIIIMTYAFLSSYFL), 42-64 (YFALSNLLSLSLPFVCAWFPYLF), 69-88 (AVTGSALSAFGLFLFFAITS), 98-120 (AAIWVIYFFWLIGAALAGVYPAL), and 133-155 (ALVLSALFTVVVSFIIGFLISRI).

Its subcellular location is the cell membrane. This is an uncharacterized protein from Pasteurella multocida (strain Pm70).